Reading from the N-terminus, the 134-residue chain is Galectin-1 (134 aa).

N-acetylalanine is present on Ala1. The 131-residue stretch at 4–134 folds into the Galectin domain; it reads GVAVTNLNLK…GLAFKSITTE (131 aa). A beta-D-galactoside contacts are provided by residues 45–49, His53, Asn62, and 69–72; these read HFNAR and WGSE.

In terms of assembly, homodimer.

The protein resides in the secreted. It localises to the extracellular space. Its subcellular location is the extracellular matrix. In terms of biological role, may regulate cell apoptosis and cell differentiation. Binds beta-galactoside and a wide array of complex carbohydrates. This is Galectin-1 from Rhinella arenarum (Argentine common toad).